We begin with the raw amino-acid sequence, 299 residues long: Probable alpha-L-glutamate ligase (299 aa).

Residues 111–293 enclose the ATP-grasp domain; sequence LQALAAANIA…VATQMIAYLE (183 aa). ATP-binding positions include K147, 184 to 185, D193, and 217 to 219; these read DF and RAN. Mg(2+) is bound by residues D254, E266, and N268. Mn(2+) is bound by residues D254, E266, and N268.

It belongs to the RimK family. Mg(2+) is required as a cofactor. Requires Mn(2+) as cofactor.

This Mannheimia succiniciproducens (strain KCTC 0769BP / MBEL55E) protein is Probable alpha-L-glutamate ligase.